Consider the following 382-residue polypeptide: Flavin-dependent monooxygenase, oxygenase subunit HsaA (382 aa).

Residues tryptophan 72, 106–108, 129–131, arginine 251, 334–335, and 356–357 contribute to the FMN site; these read SSY, WSS, AT, and HA.

It belongs to the HpaH/HsaA monooxygenase family. Homotetramer. HsaAB monooxygenase consists of an oxygenase component HsaA and a reductase component HsaB.

The enzyme catalyses 3-hydroxy-9,10-secoandrosta-1,3,5(10)-triene-9,17-dione + FMNH2 + O2 = 3,4-dihydroxy-9,10-secoandrosta-1,3,5(10)-triene-9,17-dione + FMN + H2O + H(+). The protein operates within lipid metabolism; steroid biosynthesis. Catalyzes the o-hydroxylation of 3-hydroxy-9,10-secoandrosta-1,3,5(10)-triene-9,17-dione (3-HSA) to 3,4-dihydroxy-9,10-secoandrosta-1,3,5(10)-triene-9,17-dione (3,4-DHSA) in the catabolism of cholesterol. The sequence is that of Flavin-dependent monooxygenase, oxygenase subunit HsaA (hsaA) from Rhodococcus jostii (strain RHA1).